The chain runs to 206 residues: Cytochrome b6-f complex iron-sulfur subunit, chloroplastic (206 aa).

Residues 1-29 constitute a chloroplast transit peptide; the sequence is MAMITSRRAAAPCKAQATRRSRVMSVVRA. Residues 48–68 form a helical membrane-spanning segment; it reads ILLGGASLPVGSLALGYGAFF. The region spanning 92–188 is the Rieske domain; it reads ANAWLATHQK…CDVQEDGLVT (97 aa). Residues C134, H136, C152, and H155 each coordinate [2Fe-2S] cluster. C139 and C154 are disulfide-bonded.

It belongs to the Rieske iron-sulfur protein family. As to quaternary structure, the 4 large subunits of the cytochrome b6-f complex are cytochrome b6, subunit IV (17 kDa polypeptide, petD), cytochrome f and the Rieske protein, while the 4 small subunits are petG, petL, petM and petN. The complex functions as a dimer. It depends on [2Fe-2S] cluster as a cofactor.

The protein resides in the plastid. It is found in the chloroplast thylakoid membrane. It carries out the reaction 2 oxidized [plastocyanin] + a plastoquinol + 2 H(+)(in) = 2 reduced [plastocyanin] + a plastoquinone + 4 H(+)(out). In terms of biological role, component of the cytochrome b6-f complex, which mediates electron transfer between photosystem II (PSII) and photosystem I (PSI), cyclic electron flow around PSI, and state transitions. The sequence is that of Cytochrome b6-f complex iron-sulfur subunit, chloroplastic (petC) from Volvox carteri (Green alga).